Here is an 883-residue protein sequence, read N- to C-terminus: Phosphoenolpyruvate carboxylase (883 aa).

Residues His138 and Lys546 contribute to the active site.

The protein belongs to the PEPCase type 1 family. Mg(2+) serves as cofactor.

It carries out the reaction oxaloacetate + phosphate = phosphoenolpyruvate + hydrogencarbonate. Functionally, forms oxaloacetate, a four-carbon dicarboxylic acid source for the tricarboxylic acid cycle. This Shigella dysenteriae serotype 1 (strain Sd197) protein is Phosphoenolpyruvate carboxylase.